The following is a 395-amino-acid chain: Tyrosine--tRNA ligase 2 (395 aa).

The 'HIGH' region signature appears at Pro42 to His51. The 'KMSKS' region signature appears at Lys226–Ser230. ATP is bound at residue Lys229. The S4 RNA-binding domain maps to Thr334–Ile394.

This sequence belongs to the class-I aminoacyl-tRNA synthetase family. TyrS type 2 subfamily. As to quaternary structure, homodimer.

Its subcellular location is the cytoplasm. It carries out the reaction tRNA(Tyr) + L-tyrosine + ATP = L-tyrosyl-tRNA(Tyr) + AMP + diphosphate + H(+). Catalyzes the attachment of tyrosine to tRNA(Tyr) in a two-step reaction: tyrosine is first activated by ATP to form Tyr-AMP and then transferred to the acceptor end of tRNA(Tyr). The protein is Tyrosine--tRNA ligase 2 of Vibrio parahaemolyticus serotype O3:K6 (strain RIMD 2210633).